The chain runs to 364 residues: Aminomethyltransferase (364 aa).

It belongs to the GcvT family. The glycine cleavage system is composed of four proteins: P, T, L and H.

It catalyses the reaction N(6)-[(R)-S(8)-aminomethyldihydrolipoyl]-L-lysyl-[protein] + (6S)-5,6,7,8-tetrahydrofolate = N(6)-[(R)-dihydrolipoyl]-L-lysyl-[protein] + (6R)-5,10-methylene-5,6,7,8-tetrahydrofolate + NH4(+). Its function is as follows. The glycine cleavage system catalyzes the degradation of glycine. The sequence is that of Aminomethyltransferase from Bacillus licheniformis (strain ATCC 14580 / DSM 13 / JCM 2505 / CCUG 7422 / NBRC 12200 / NCIMB 9375 / NCTC 10341 / NRRL NRS-1264 / Gibson 46).